Consider the following 2073-residue polypeptide: Non-reducing polyketide synthase cla3 (2073 aa).

The N-terminal acylcarrier protein transacylase domain (SAT) stretch occupies residues 9-242 (LLFGDYTEPW…EKLNIHALQH (234 aa)). Positions 363-793 (SGRIAIVGMS…GGNGCLLLEE (431 aa)) constitute a Ketosynthase family 3 (KS3) domain. Residues Cys-538, His-673, and His-712 each act as for beta-ketoacyl synthase activity in the active site. The malonyl-CoA:ACP transacylase (MAT) domain stretch occupies residues 898–1198 (TFTGQGSQYA…KIMSTLDATG (301 aa)). Catalysis depends on Ser-987, which acts as the For acyl/malonyl transferase activity. The tract at residues 1276 to 1590 (STCAQYVITE…QNVILERLLG (315 aa)) is product template (PT) domain. The N-terminal hotdog fold stretch occupies residues 1279 to 1420 (AQYVITETKT…AGLESQWEKS (142 aa)). The region spanning 1279 to 1586 (AQYVITETKT…FHRVQNVILE (308 aa)) is the PKS/mFAS DH domain. His-1311 acts as the Proton acceptor; for dehydratase activity in catalysis. A C-terminal hotdog fold region spans residues 1439-1586 (QGHRIQRDIY…FHRVQNVILE (148 aa)). The active-site Proton donor; for dehydratase activity is the Asp-1500. The tract at residues 1594-1637 (SSSVPAQASDPLRSKRSPQEARSLPGEAKTEKPGSTIATTSPVL) is disordered. One can recognise a Carrier domain in the interval 1641-1718 (KSEQGMFQAL…NLRCAFDEDV (78 aa)). At Ser-1678 the chain carries O-(pantetheine 4'-phosphoryl)serine. A compositionally biased stretch (polar residues) spans 1721–1738 (EFTDSEVTSGTPNSSESV). Residues 1721–1786 (EFTDSEVTSG…GVLDDGSPQP (66 aa)) form a disordered region. Positions 1747 to 1774 (PEEHAFKEPKDDSPLARRDMDNSNDRSL) are enriched in basic and acidic residues. The tract at residues 1805-1950 (FLIADGSGSI…MQQHLRAIFK (146 aa)) is thioesterase (TE) domain. His-2058 (for thioesterase activity) is an active-site residue.

Its pathway is secondary metabolite biosynthesis. Its function is as follows. Highly reducing polyketide synthase; part of the gene cluster that mediates the biosynthesis of cladosporin, a tricyclic octaketide that acts as an antimalarial agent though inhibition of the Plasmodium falciparum lysyl-tRNA synthetase. The highly reducing polyketide synthase cla2 is responsible for biosynthesis up to the pentaketide stage, including of the tetrahydropyran (THP) ring, whereas the three subsequent ketide extensions with no reduction are catalyzed by the non-reducing polyketide synthase cla3. This Cladosporium cladosporioides protein is Non-reducing polyketide synthase cla3.